The following is a 100-amino-acid chain: MANKAMIQRELKRQNLVMKFAKKRAILKQQIQQASSLKEKLALHRKLQQLPRNSSPVRLHNRCLVTGRPKGYFRDFGLSRHVLREMAHEGLLPGVRKASW.

Belongs to the universal ribosomal protein uS14 family. In terms of assembly, part of the 30S ribosomal subunit.

The protein localises to the plastid. Its subcellular location is the chloroplast. Its function is as follows. Binds 16S rRNA, required for the assembly of 30S particles. The polypeptide is Small ribosomal subunit protein uS14c (Tetradesmus obliquus (Green alga)).